Here is a 623-residue protein sequence, read N- to C-terminus: ATPase expression protein 3 (623 aa).

5 PPR repeats span residues 217–251, 252–292, 362–396, 405–439, and 445–479; these read SVQC…GCKP, NTTT…NGIF, NLKF…QLKF, NSET…LVGP, and NVNT…SERY.

It is found in the mitochondrion inner membrane. Required for respiration. In Candida glabrata (strain ATCC 2001 / BCRC 20586 / JCM 3761 / NBRC 0622 / NRRL Y-65 / CBS 138) (Yeast), this protein is ATPase expression protein 3 (AEP3).